The chain runs to 681 residues: Peroxisomal acyl-coenzyme A oxidase 2 (681 aa).

The disordered stretch occupies residues M1–S28. S9 carries the phosphoserine modification. Phosphothreonine is present on T13. Positions W14–S28 are enriched in basic and acidic residues. An N6-succinyllysine mark is found at K66, K137, K303, K453, K561, and K667. Positions P679–L681 match the Microbody targeting signal motif.

This sequence belongs to the acyl-CoA oxidase family. As to quaternary structure, homodimer. Requires FAD as cofactor. Post-translationally, acetylation of Lys-667 is observed in liver mitochondria from fasted mice but not from fed mice.

It is found in the peroxisome. The enzyme catalyses (25R)-3alpha,7alpha,12alpha-trihydroxy-5beta-cholestan-26-oyl-CoA + A + H2O = (24R,25R)-3alpha,7alpha,12alpha,24-tetrahydroxy-5beta-cholestan-26-oyl-CoA + AH2. The catalysed reaction is (25S)-3alpha,7alpha,12alpha-trihydroxy-5beta-cholestan-26-oyl-CoA + O2 = (24E)-3alpha,7alpha,12alpha-trihydroxy-5beta-cholest-24-en-26-oyl-CoA + H2O2. Its function is as follows. Oxidizes the CoA esters of the bile acid intermediates di- and tri-hydroxycoprostanic acids. Capable of oxidizing short as well as long chain 2-methyl branched fatty acids. The polypeptide is Peroxisomal acyl-coenzyme A oxidase 2 (Mus musculus (Mouse)).